A 173-amino-acid chain; its full sequence is NADH-ubiquinone oxidoreductase chain 6 (173 aa).

A run of 5 helical transmembrane segments spans residues 1-21, 24-44, 53-73, 87-107, and 141-161; these read MTYL…AVAS, APYF…GVLV, LVLF…SAAL, VLGY…LFWG, and GGML…VLEL.

The protein belongs to the complex I subunit 6 family.

It localises to the mitochondrion membrane. The enzyme catalyses a ubiquinone + NADH + 5 H(+)(in) = a ubiquinol + NAD(+) + 4 H(+)(out). In terms of biological role, core subunit of the mitochondrial membrane respiratory chain NADH dehydrogenase (Complex I) that is believed to belong to the minimal assembly required for catalysis. Complex I functions in the transfer of electrons from NADH to the respiratory chain. The immediate electron acceptor for the enzyme is believed to be ubiquinone. In Oncorhynchus mykiss (Rainbow trout), this protein is NADH-ubiquinone oxidoreductase chain 6 (MT-ND6).